Consider the following 623-residue polypeptide: Xaa-Pro aminopeptidase 1 (623 aa).

Arg-77 serves as a coordination point for a peptide. Lys-304 bears the N6-acetyllysine mark. His-395 contacts a peptide. The Mn(2+) site is built by Asp-415, Asp-426, and His-489. His-489, His-498, and Glu-523 together coordinate a peptide. The Mn(2+) site is built by Glu-523 and Glu-537.

The protein belongs to the peptidase M24B family. As to quaternary structure, homodimer. It depends on Mn(2+) as a cofactor.

It is found in the cytoplasm. Its subcellular location is the cytosol. It carries out the reaction Release of any N-terminal amino acid, including proline, that is linked to proline, even from a dipeptide or tripeptide.. Its function is as follows. Metalloaminopeptidase that catalyzes the removal of a penultimate prolyl residue from the N-termini of peptides, such as Arg-Pro-Pro. Contributes to the degradation of bradykinin. In Bos taurus (Bovine), this protein is Xaa-Pro aminopeptidase 1 (XPNPEP1).